Consider the following 130-residue polypeptide: Glycine cleavage system H protein (130 aa).

Residues 25–107 (IATIGITEFA…YGEGWFLKVR (83 aa)) form the Lipoyl-binding domain. Lys-66 is modified (N6-lipoyllysine).

Belongs to the GcvH family. As to quaternary structure, the glycine cleavage system is composed of four proteins: P, T, L and H. It depends on (R)-lipoate as a cofactor.

Its function is as follows. The glycine cleavage system catalyzes the degradation of glycine. The H protein shuttles the methylamine group of glycine from the P protein to the T protein. The polypeptide is Glycine cleavage system H protein (Nostoc sp. (strain PCC 7120 / SAG 25.82 / UTEX 2576)).